The sequence spans 218 residues: Ras-related protein RabT2 (218 aa).

Residue 32-39 participates in GTP binding; sequence GDYKTGKG. The Effector region motif lies at 54 to 61; sequence VSSIGVDF. Residues 80–84 and 140–143 contribute to the GTP site; these read DANSC and NKCD. Cysteine 215 is modified (cysteine methyl ester). Cysteine 215 is lipidated: S-geranylgeranyl cysteine. Positions 216-218 are cleaved as a propeptide — removed in mature form; the sequence is NIL.

The protein belongs to the small GTPase superfamily. Rab family.

It localises to the cell membrane. The sequence is that of Ras-related protein RabT2 (rabT2) from Dictyostelium discoideum (Social amoeba).